The following is a 61-amino-acid chain: DNA-directed RNA polymerase subunit Rpo6 (61 aa).

It belongs to the archaeal Rpo6/eukaryotic RPB6 RNA polymerase subunit family. In terms of assembly, part of the RNA polymerase complex.

The protein resides in the cytoplasm. It catalyses the reaction RNA(n) + a ribonucleoside 5'-triphosphate = RNA(n+1) + diphosphate. DNA-dependent RNA polymerase (RNAP) catalyzes the transcription of DNA into RNA using the four ribonucleoside triphosphates as substrates. This Thermoplasma volcanium (strain ATCC 51530 / DSM 4299 / JCM 9571 / NBRC 15438 / GSS1) protein is DNA-directed RNA polymerase subunit Rpo6.